Consider the following 301-residue polypeptide: MEDMNEYSNIEEFAEGSKINASKNQQDDGKMFIGGLSWDTSKKDLTEYLSRFGEVVDCTIKTDPVTGRSRGFGFVLFKDAASVDKVLELKEHKLDGKLIDPKRAKALKGKEPPKKVFVGGLSPDTSEEQIKEYFGAFGEIENIELPMDTKTNERRGFCFITYTDEEPVKKLLESRYHQIGSGKCEIKVAQPKEVYRQQQQQQKGGRGAAAGGRGGARGRGRGQGQNWNQGFNNYYDQGYGNYNSAYGGDQNYSGYGGYDYTGYNYGNYGYGQGYADYSGQQSTYGKASRGGGNHQNNYQPY.

RRM domains follow at residues 29–111 (GKMF…KGKE) and 114–193 (KKVF…QPKE). The residue at position 42 (Lys-42) is an N6-methyllysine. Lys-90 is covalently cross-linked (Glycyl lysine isopeptide (Lys-Gly) (interchain with G-Cter in SUMO2)). Lys-97 carries the post-translational modification N6-acetyllysine. At Ser-122 the chain carries Phosphoserine. Disordered regions lie at residues 194–229 (VYRQ…NWNQ) and 279–301 (GQQS…YQPY). Over residues 204–223 (GGRGAAAGGRGGARGRGRGQ) the composition is skewed to gly residues. A necessary for interaction with TNPO1 region spans residues 223 to 301 (QGQNWNQGFN…GNHQNNYQPY (79 aa)). Residue Arg-289 is modified to Dimethylated arginine; alternate. Arg-289 carries the omega-N-methylarginine; alternate modification.

Interacts with TNPO1. Interacts with ZNF148. Dimethylation of Arg-289 is probably of the asymmetric type. Expressed in skeletal muscle, myoblast, myotube, heart, brain, liver, kidney, heart, lung, stomach, small intestine, large intestine, spleen, and testis (at protein level). Expressed in brain, skeletal muscle, heart, lung, liver, stomach, small intestine, large intestine, kidney, spleen and testis.

Its subcellular location is the nucleus. The protein resides in the cytoplasm. Its function is as follows. Acts as a transcriptional regulator. Promotes transcription repression. Promotes transcription activation in differentiated myotubes. Binds to double- and single-stranded DNA sequences. Binds to the transcription suppressor CATR sequence of the COX5B promoter. Binds with high affinity to RNA molecules that contain AU-rich elements (AREs) found within the 3'-UTR of many proto-oncogenes and cytokine mRNAs. Binds both to nuclear and cytoplasmic poly(A) mRNAs. Binds to poly(G) and poly(A), but not to poly(U) or poly(C) RNA homopolymers. Binds to the 5'-ACUAGC-3' RNA consensus sequence. The chain is Heterogeneous nuclear ribonucleoprotein D-like (Hnrnpdl) from Mus musculus (Mouse).